The sequence spans 432 residues: Adenylosuccinate synthetase (432 aa).

GTP contacts are provided by residues 13 to 19 (GDEGKGK) and 41 to 43 (GHT). Asp14 acts as the Proton acceptor in catalysis. Mg(2+) contacts are provided by Asp14 and Gly41. IMP is bound by residues 14-17 (DEGK), 39-42 (NAGH), Thr130, Arg144, Gln225, Thr240, and Arg304. His42 (proton donor) is an active-site residue. Position 300-306 (300-306 (ATTGRRR)) interacts with substrate. Residues Arg306, 332–334 (KLD), and 415–417 (STG) contribute to the GTP site.

The protein belongs to the adenylosuccinate synthetase family. Homodimer. It depends on Mg(2+) as a cofactor.

It is found in the cytoplasm. It catalyses the reaction IMP + L-aspartate + GTP = N(6)-(1,2-dicarboxyethyl)-AMP + GDP + phosphate + 2 H(+). The protein operates within purine metabolism; AMP biosynthesis via de novo pathway; AMP from IMP: step 1/2. Its function is as follows. Plays an important role in the de novo pathway of purine nucleotide biosynthesis. Catalyzes the first committed step in the biosynthesis of AMP from IMP. The protein is Adenylosuccinate synthetase of Salmonella choleraesuis (strain SC-B67).